The sequence spans 570 residues: Cation/calcium exchanger 1 (570 aa).

13 helical membrane passes run 14–34 (LSLLINIFFIFLIFLHFASQT), 97–117 (SPVLGHLVLSAWLFVLFYLLG), 141–161 (MAGVTLLSLGNGAPDLFSSVV), 176–196 (ILGGAFFVSSFVVGTICVLIG), 212–232 (VFLLVALCCLGLIIFIGKVTI), 235–255 (ALCYLSIYLLYVGFLSVSHFF), 344–364 (CAVVSTAIAPVLLTELYCSHY), 371–391 (LILYIISGSIGLIVGILAYLT), 401–421 (FSLVWLLGGFTMSVTWTYMIA), 427–447 (LLISLGNIFGISPSVLGLTVL), 479–499 (YAGPLFNTVIGLGVPLVISSL), 513–533 (SLLETLGFLMVGLLWALVIMP), and 546–566 (GLLAIYLCFLSLRLARVFGVL).

It belongs to the Ca(2+):cation antiporter (CaCA) (TC 2.A.19) family. Cation/calcium exchanger (CCX) subfamily. In terms of tissue distribution, expressed in roots, leaves, stems and flowers.

The protein resides in the vacuole membrane. In terms of biological role, vacuolar membrane-localized H(+)-dependent K(+) and Na(+) transporter. This Arabidopsis thaliana (Mouse-ear cress) protein is Cation/calcium exchanger 1 (CCX1).